A 274-amino-acid polypeptide reads, in one-letter code: Large ribosomal subunit protein uL2 (274 aa).

The tract at residues 224–259 (AMNPVDHPHGGGEGRTSGGRHPVTPWGIPTKGYKTR) is disordered.

Belongs to the universal ribosomal protein uL2 family. As to quaternary structure, part of the 50S ribosomal subunit. Forms a bridge to the 30S subunit in the 70S ribosome.

One of the primary rRNA binding proteins. Required for association of the 30S and 50S subunits to form the 70S ribosome, for tRNA binding and peptide bond formation. It has been suggested to have peptidyltransferase activity; this is somewhat controversial. Makes several contacts with the 16S rRNA in the 70S ribosome. The protein is Large ribosomal subunit protein uL2 of Citrifermentans bemidjiense (strain ATCC BAA-1014 / DSM 16622 / JCM 12645 / Bem) (Geobacter bemidjiensis).